The chain runs to 292 residues: Alpha-soluble NSF attachment protein (292 aa).

Belongs to the SNAP family.

It localises to the cytoplasmic vesicle. The protein localises to the membrane. Its function is as follows. Required for vesicular transport between the endoplasmic reticulum and the Golgi apparatus. Also between the endosome and phagosome. This chain is Alpha-soluble NSF attachment protein, found in Drosophila melanogaster (Fruit fly).